Here is a 79-residue protein sequence, read N- to C-terminus: ATP synthase subunit c (79 aa).

Helical transmembrane passes span 11–31 (MAAALMMGLAAIGAAIGIGIL) and 53–73 (FFIVMGLVDAIPMIAVGLGLY).

Belongs to the ATPase C chain family. F-type ATPases have 2 components, F(1) - the catalytic core - and F(0) - the membrane proton channel. F(1) has five subunits: alpha(3), beta(3), gamma(1), delta(1), epsilon(1). F(0) has three main subunits: a(1), b(2) and c(10-14). The alpha and beta chains form an alternating ring which encloses part of the gamma chain. F(1) is attached to F(0) by a central stalk formed by the gamma and epsilon chains, while a peripheral stalk is formed by the delta and b chains.

The protein resides in the cell inner membrane. F(1)F(0) ATP synthase produces ATP from ADP in the presence of a proton or sodium gradient. F-type ATPases consist of two structural domains, F(1) containing the extramembraneous catalytic core and F(0) containing the membrane proton channel, linked together by a central stalk and a peripheral stalk. During catalysis, ATP synthesis in the catalytic domain of F(1) is coupled via a rotary mechanism of the central stalk subunits to proton translocation. Functionally, key component of the F(0) channel; it plays a direct role in translocation across the membrane. A homomeric c-ring of between 10-14 subunits forms the central stalk rotor element with the F(1) delta and epsilon subunits. The sequence is that of ATP synthase subunit c from Pectobacterium atrosepticum (strain SCRI 1043 / ATCC BAA-672) (Erwinia carotovora subsp. atroseptica).